A 623-amino-acid chain; its full sequence is Phosphomethylpyrimidine synthase (623 aa).

Substrate contacts are provided by residues asparagine 221, methionine 250, tyrosine 279, histidine 315, 335-337 (SRG), 376-379 (DGLR), and glutamate 415. Histidine 419 is a binding site for Zn(2+). Tyrosine 442 serves as a coordination point for substrate. Histidine 483 provides a ligand contact to Zn(2+). 3 residues coordinate [4Fe-4S] cluster: cysteine 563, cysteine 566, and cysteine 571.

This sequence belongs to the ThiC family. In terms of assembly, homodimer. The cofactor is [4Fe-4S] cluster.

It carries out the reaction 5-amino-1-(5-phospho-beta-D-ribosyl)imidazole + S-adenosyl-L-methionine = 4-amino-2-methyl-5-(phosphooxymethyl)pyrimidine + CO + 5'-deoxyadenosine + formate + L-methionine + 3 H(+). It participates in cofactor biosynthesis; thiamine diphosphate biosynthesis. Its function is as follows. Catalyzes the synthesis of the hydroxymethylpyrimidine phosphate (HMP-P) moiety of thiamine from aminoimidazole ribotide (AIR) in a radical S-adenosyl-L-methionine (SAM)-dependent reaction. The sequence is that of Phosphomethylpyrimidine synthase from Parvibaculum lavamentivorans (strain DS-1 / DSM 13023 / NCIMB 13966).